Here is a 97-residue protein sequence, read N- to C-terminus: Glutamyl-tRNA(Gln) amidotransferase subunit C (97 aa).

It belongs to the GatC family. Heterotrimer of A, B and C subunits.

The enzyme catalyses L-glutamyl-tRNA(Gln) + L-glutamine + ATP + H2O = L-glutaminyl-tRNA(Gln) + L-glutamate + ADP + phosphate + H(+). It catalyses the reaction L-aspartyl-tRNA(Asn) + L-glutamine + ATP + H2O = L-asparaginyl-tRNA(Asn) + L-glutamate + ADP + phosphate + 2 H(+). Its function is as follows. Allows the formation of correctly charged Asn-tRNA(Asn) or Gln-tRNA(Gln) through the transamidation of misacylated Asp-tRNA(Asn) or Glu-tRNA(Gln) in organisms which lack either or both of asparaginyl-tRNA or glutaminyl-tRNA synthetases. The reaction takes place in the presence of glutamine and ATP through an activated phospho-Asp-tRNA(Asn) or phospho-Glu-tRNA(Gln). In Saccharolobus solfataricus (strain ATCC 35092 / DSM 1617 / JCM 11322 / P2) (Sulfolobus solfataricus), this protein is Glutamyl-tRNA(Gln) amidotransferase subunit C.